The sequence spans 118 residues: Putative ankyrin repeat protein R747 (118 aa).

The stretch at 70-99 (NCYYLLDYAIMKNDIPVIVTLIEKGANINR) is one ANK repeat.

The polypeptide is Putative ankyrin repeat protein R747 (Acanthamoeba polyphaga (Amoeba)).